Reading from the N-terminus, the 317-residue chain is Melanocyte-stimulating hormone receptor (317 aa).

Topologically, residues Met-1–Glu-37 are extracellular. The N-linked (GlcNAc...) asparagine glycan is linked to Asn-29. Residues Val-38–Ile-63 form a helical membrane-spanning segment. The Cytoplasmic portion of the chain corresponds to Ala-64–Pro-72. Residues Met-73 to Leu-93 traverse the membrane as a helical segment. Topologically, residues Glu-94–Asn-118 are extracellular. A helical membrane pass occupies residues Val-119–Met-140. Topologically, residues Asp-141–Arg-163 are cytoplasmic. Residues Ala-164–Tyr-183 form a helical membrane-spanning segment. Over Asp-184–Cys-191 the chain is Extracellular. The chain crosses the membrane as a helical span at residues Leu-192–Leu-211. Topologically, residues Ile-212–Ala-240 are cytoplasmic. A helical transmembrane segment spans residues Ala-241–Val-266. Topologically, residues Cys-267–Asn-279 are extracellular. Residues Phe-280–Phe-300 traverse the membrane as a helical segment. At Arg-301–Trp-317 the chain is on the cytoplasmic side.

Belongs to the G-protein coupled receptor 1 family. In terms of assembly, interacts with MGRN1, but does not undergo MGRN1-mediated ubiquitination; this interaction competes with GNAS-binding and thus inhibits agonist-induced cAMP production. Interacts with OPN3; the interaction results in a decrease in MC1R-mediated cAMP signaling and ultimately a decrease in melanin production in melanocytes.

The protein localises to the cell membrane. In terms of biological role, receptor for MSH (alpha, beta and gamma) and ACTH. The activity of this receptor is mediated by G proteins which activate adenylate cyclase. Mediates melanogenesis, the production of eumelanin (black/brown) and phaeomelanin (red/yellow), via regulation of cAMP signaling in melanocytes. In Eulemur fulvus fulvus (Brown lemur), this protein is Melanocyte-stimulating hormone receptor (MC1R).